Here is a 367-residue protein sequence, read N- to C-terminus: DNA-directed RNA polymerase II subunit GRINL1A (367 aa).

Residues D15–F40 are a coiled coil. Positions K29–V68 are important for transcription repressor activity. Composition is skewed to polar residues over residues S117–G131, R176–S185, and G205–Q225. 3 disordered regions span residues S117–S185, D203–Q225, and P254–K281. Residues K226–H297 form an interaction with Pol II region. S269 carries the post-translational modification Phosphoserine. The tract at residues M298–K313 is important for transcription repressor activity. A coiled-coil region spans residues T300–Q329. An interaction with Pol II region spans residues Q314–M339. Residues L335–F367 are disordered. The segment covering D357–F367 has biased composition (acidic residues).

This sequence belongs to the GRINL1 family. Component of the Pol II(G) complex, which contains the RNA polymerase II (Pol II) core complex subunits and POLR2M isoform 1. Pol II(G) appears to be an abundant form of Pol II. Dephosphorylated at Ser-269 by the PNUTS-PP1 complex, promoting RNA polymerase II transcription pause-release.

Its subcellular location is the nucleus. In terms of biological role, appears to be a stable component of the Pol II(G) complex form of RNA polymerase II (Pol II). Pol II synthesizes mRNA precursors and many functional non-coding RNAs and is the central component of the basal RNA polymerase II transcription machinery. May play a role in the Mediator complex-dependent regulation of transcription activation. Acts as a negative regulator of transcriptional activation; this repression is relieved by the Mediator complex, which restores Pol II(G) activator-dependent transcription to a level equivalent to that of Pol II. The sequence is that of DNA-directed RNA polymerase II subunit GRINL1A (POLR2M) from Pongo abelii (Sumatran orangutan).